An 86-amino-acid polypeptide reads, in one-letter code: Molybdopterin synthase sulfur carrier subunit (86 aa).

Residue G86 is modified to 1-thioglycine; alternate. At G86 the chain carries Glycyl adenylate; alternate.

Belongs to the MoaD family. MOCS2A subfamily. As to quaternary structure, heterotetramer; composed of 2 small (mocs2s) and 2 large (mocs2l) subunits. In terms of processing, C-terminal thiocarboxylation occurs in 2 steps, it is first acyl-adenylated (-COAMP) via the hesA/moeB/thiF part of mocs3, then thiocarboxylated (-COSH) via the rhodanese domain of mocs3.

It is found in the cytoplasm. It participates in cofactor biosynthesis; molybdopterin biosynthesis. In terms of biological role, acts as a sulfur carrier required for molybdopterin biosynthesis. Component of the molybdopterin synthase complex that catalyzes the conversion of precursor Z into molybdopterin by mediating the incorporation of 2 sulfur atoms into precursor Z to generate a dithiolene group. In the complex, serves as sulfur donor by being thiocarboxylated (-COSH) at its C-terminus by mocs3. After interaction with mocs2l, the sulfur is then transferred to precursor Z to form molybdopterin. This is Molybdopterin synthase sulfur carrier subunit (mocs2s) from Dictyostelium discoideum (Social amoeba).